We begin with the raw amino-acid sequence, 469 residues long: Actin-related protein 4 (469 aa).

The tract at residues 104 to 136 (PERSTPPSKKGINISDDGDVPMEDDGNNNEDAT) is disordered. Residues 119–136 (DDGDVPMEDDGNNNEDAT) are compositionally biased toward acidic residues.

The protein belongs to the actin family. ARP4 subfamily. In terms of assembly, component of the NuA4 histone acetyltransferase complex, of the INO80 chromatin remodeling complex, and of the SWR1 chromatin remodeling complex.

It is found in the nucleus. Functionally, chromatin interaction component of the NuA4 histone acetyltransferase complex which is involved in transcriptional activation of selected genes principally by acetylation of nucleosomal histone H4 and H2A. The NuA4 complex is also involved in DNA repair. Is required for NuA4 complex integrity. Component of the SWR1 complex which mediates the ATP-dependent exchange of histone H2A for the H2A variant H2A.Z leading to transcriptional regulation of selected genes by chromatin remodeling. Component of the INO80 complex which remodels chromatin by shifting nucleosomes and is involved in DNA repair. This chain is Actin-related protein 4 (arp-4), found in Neurospora crassa (strain ATCC 24698 / 74-OR23-1A / CBS 708.71 / DSM 1257 / FGSC 987).